We begin with the raw amino-acid sequence, 69 residues long: MFGLGGQELVLILLIILLLFGAKKLPELAKGLGKGMKEFKKAQSEIEEELNKAVDDTPEKEKKSSSEKS.

The helical transmembrane segment at 1–21 threads the bilayer; the sequence is MFGLGGQELVLILLIILLLFG. The segment at 48–69 is disordered; that stretch reads EELNKAVDDTPEKEKKSSSEKS.

This sequence belongs to the TatA/E family. Forms a complex with TatC.

It localises to the cell inner membrane. Its function is as follows. Part of the twin-arginine translocation (Tat) system that transports large folded proteins containing a characteristic twin-arginine motif in their signal peptide across membranes. TatA could form the protein-conducting channel of the Tat system. The protein is Sec-independent protein translocase protein TatA of Chlorobium phaeobacteroides (strain BS1).